We begin with the raw amino-acid sequence, 62 residues long: DNA gyrase inhibitor YacG (62 aa).

Zn(2+) is bound by residues cysteine 9, cysteine 12, cysteine 27, and cysteine 31. The segment covering 43–52 (GYRIPGEKAP) has biased composition (basic and acidic residues). The interval 43-62 (GYRIPGEKAPESGGEEPGDE) is disordered.

This sequence belongs to the DNA gyrase inhibitor YacG family. In terms of assembly, interacts with GyrB. Zn(2+) is required as a cofactor.

Its function is as follows. Inhibits all the catalytic activities of DNA gyrase by preventing its interaction with DNA. Acts by binding directly to the C-terminal domain of GyrB, which probably disrupts DNA binding by the gyrase. In Geobacter sp. (strain M21), this protein is DNA gyrase inhibitor YacG.